A 192-amino-acid polypeptide reads, in one-letter code: Lipid A acyltransferase PagP (192 aa).

Positions 1-26 (MTVVNKSFLTFLVFFCQILFPLNASA) are cleaved as a signal peptide. Residues His64, Asp107, and Ser108 contribute to the active site.

This sequence belongs to the lipid A palmitoyltransferase family. As to quaternary structure, homodimer.

The protein resides in the cell outer membrane. The catalysed reaction is a lipid A + a 1,2-diacyl-sn-glycero-3-phosphocholine = a hepta-acyl lipid A + a 2-acyl-sn-glycero-3-phosphocholine. It catalyses the reaction a lipid IVA + a 1,2-diacyl-sn-glycero-3-phosphocholine = a lipid IVB + a 2-acyl-sn-glycero-3-phosphocholine. The enzyme catalyses a lipid IIA + a 1,2-diacyl-sn-glycero-3-phosphocholine = a lipid IIB + a 2-acyl-sn-glycero-3-phosphocholine. Functionally, transfers a fatty acid residue from the sn-1 position of a phospholipid to the N-linked hydroxyfatty acid chain on the proximal unit of lipid A or its precursors. This Cronobacter turicensis (strain DSM 18703 / CCUG 55852 / LMG 23827 / z3032) protein is Lipid A acyltransferase PagP.